Here is a 407-residue protein sequence, read N- to C-terminus: uncharacterized protein (407 aa).

An N-terminal signal peptide occupies residues 1–27 (MRILAMTRAHNAGRTLAATLDSLAVFS).

This is an uncharacterized protein from Mycobacterium bovis (strain ATCC BAA-935 / AF2122/97).